The following is a 106-amino-acid chain: Toxin-like structure LSTX-D5 (106 aa).

The N-terminal stretch at 1–20 is a signal peptide; sequence MMKVLVVVALLVTLISYSSS. The propeptide occupies 21 to 41; that stretch reads EGIDDLETDELLSLMANEQTR. 4 cysteine pairs are disulfide-bonded: Cys45–Cys60, Cys52–Cys69, Cys59–Cys85, and Cys71–Cys83.

The protein belongs to the neurotoxin 19 (CSTX) family. 02 (D7) subfamily. Expressed by the venom gland.

The protein resides in the secreted. This Lycosa singoriensis (Wolf spider) protein is Toxin-like structure LSTX-D5.